Consider the following 565-residue polypeptide: Formate--tetrahydrofolate ligase (565 aa).

67–74 (TPLGEGKT) contacts ATP.

This sequence belongs to the formate--tetrahydrofolate ligase family.

It carries out the reaction (6S)-5,6,7,8-tetrahydrofolate + formate + ATP = (6R)-10-formyltetrahydrofolate + ADP + phosphate. Its pathway is one-carbon metabolism; tetrahydrofolate interconversion. This is Formate--tetrahydrofolate ligase from Saccharopolyspora erythraea (strain ATCC 11635 / DSM 40517 / JCM 4748 / NBRC 13426 / NCIMB 8594 / NRRL 2338).